The sequence spans 525 residues: Light-independent protochlorophyllide reductase subunit B (525 aa).

Asp36 contributes to the [4Fe-4S] cluster binding site. Residue Asp290 is the Proton donor of the active site. 425–426 (GL) is a binding site for substrate.

It belongs to the ChlB/BchB/BchZ family. Protochlorophyllide reductase is composed of three subunits; ChlL, ChlN and ChlB. Forms a heterotetramer of two ChlB and two ChlN subunits. Requires [4Fe-4S] cluster as cofactor.

It carries out the reaction chlorophyllide a + oxidized 2[4Fe-4S]-[ferredoxin] + 2 ADP + 2 phosphate = protochlorophyllide a + reduced 2[4Fe-4S]-[ferredoxin] + 2 ATP + 2 H2O. It participates in porphyrin-containing compound metabolism; chlorophyll biosynthesis (light-independent). Component of the dark-operative protochlorophyllide reductase (DPOR) that uses Mg-ATP and reduced ferredoxin to reduce ring D of protochlorophyllide (Pchlide) to form chlorophyllide a (Chlide). This reaction is light-independent. The NB-protein (ChlN-ChlB) is the catalytic component of the complex. The sequence is that of Light-independent protochlorophyllide reductase subunit B from Prochlorococcus marinus (strain MIT 9312).